Reading from the N-terminus, the 155-residue chain is MKKLIIIFTLFLSQACNLSTMHKIDTKEDMKILYSEIAELRKKLNLNHLEIDDTLEKVAKEYAIKLGENRTITHTLFGTTPMQRIHKYDQSFNLTREILASGIELNRVVNAWLNSPSHKEALINTDTDKIGGYRLKTTDNIDIFVVLFGKRKYKN.

Residues 37-140 (IAELRKKLNL…GGYRLKTTDN (104 aa)) form the SCP domain.

This is an uncharacterized protein from Borreliella burgdorferi (strain ATCC 35210 / DSM 4680 / CIP 102532 / B31) (Borrelia burgdorferi).